Reading from the N-terminus, the 1097-residue chain is UPF0746 protein DDB_G0281095 (1097 aa).

Basic and acidic residues predominate over residues 1 to 11 (MVNNNKRKEIE). A disordered region spans residues 1-24 (MVNNNKRKEIENQENDNDDDNDGL). Acidic residues predominate over residues 12–22 (NQENDNDDDND). An SAP domain is found at 35–69 (YDSIRSKELQTIAKSLGLPNNGKKQEVYKRIEGYF). The stretch at 329 to 521 (FKEIREIHQQ…QLILELNEIQ (193 aa)) forms a coiled coil.

The protein belongs to the UPF0746 family.

In Dictyostelium discoideum (Social amoeba), this protein is UPF0746 protein DDB_G0281095.